Here is a 588-residue protein sequence, read N- to C-terminus: Aspartate--tRNA ligase (588 aa).

An L-aspartate-binding site is contributed by E177. The tract at residues 201–204 is aspartate; that stretch reads QIFK. Position 223 (R223) interacts with L-aspartate. Residues 223–225 and Q232 each bind ATP; that span reads RDE. Residue H451 coordinates L-aspartate. Position 485 (E485) interacts with ATP. Position 492 (R492) interacts with L-aspartate. ATP is bound at residue 537-540; that stretch reads GLDR.

The protein belongs to the class-II aminoacyl-tRNA synthetase family. Type 1 subfamily. Homodimer.

It is found in the cytoplasm. It carries out the reaction tRNA(Asp) + L-aspartate + ATP = L-aspartyl-tRNA(Asp) + AMP + diphosphate. Catalyzes the attachment of L-aspartate to tRNA(Asp) in a two-step reaction: L-aspartate is first activated by ATP to form Asp-AMP and then transferred to the acceptor end of tRNA(Asp). This chain is Aspartate--tRNA ligase, found in Staphylococcus saprophyticus subsp. saprophyticus (strain ATCC 15305 / DSM 20229 / NCIMB 8711 / NCTC 7292 / S-41).